The primary structure comprises 130 residues: L-aspartate semialdehyde sulfurtransferase iron-sulfur subunit (130 aa).

2 consecutive 4Fe-4S ferredoxin-type domains span residues 72-101 (RPIH…FDET) and 102-130 (WSLC…KLGE). 8 residues coordinate [4Fe-4S] cluster: Cys-81, Cys-84, Cys-87, Cys-91, Cys-111, Cys-114, Cys-117, and Cys-121.

As to quaternary structure, may form a complex with MA_1821. [4Fe-4S] cluster serves as cofactor.

The protein operates within amino-acid biosynthesis. Required for O-acetylhomoserine sulfhydrylase (OAHS)-independent homocysteine (Hcy) biosynthesis. Together with MA_1821, catalyzes the condensation of sulfide with aspartate semialdehyde to generate homocysteine. May be involved in the reduction of the disulfide formed in MA_1821. The polypeptide is L-aspartate semialdehyde sulfurtransferase iron-sulfur subunit (Methanosarcina acetivorans (strain ATCC 35395 / DSM 2834 / JCM 12185 / C2A)).